Consider the following 475-residue polypeptide: Trifunctional enzyme subunit beta, mitochondrial (475 aa).

The N-terminal 34 residues, 1 to 34 (MISLLTYTLKNLPNTSKWALRFCMRPLSSSSQLQ), are a transit peptide targeting the mitochondrion. Position 73 is an N6-acetyllysine; alternate (K73). K73 carries the post-translational modification N6-succinyllysine; alternate. C139 (acyl-thioester intermediate) is an active-site residue. Residues 174–221 (IRHSRKMRKMMLDLNKAKTLAQRLSIISKFRLNFLSPELPAVSEFSTS) lie within the membrane without spanning it. The residue at position 189 (K189) is an N6-acetyllysine; alternate. K189 bears the N6-succinyllysine; alternate mark. An N6-succinyllysine mark is found at K191 and K292. K294 bears the N6-acetyllysine; alternate mark. K294 carries the N6-succinyllysine; alternate modification. The residue at position 299 (K299) is an N6-acetyllysine. The residue at position 333 (K333) is an N6-acetyllysine; alternate. An N6-succinyllysine; alternate modification is found at K333. Residues K349 and K362 each carry the N6-acetyllysine modification. Residue C459 is the Proton donor/acceptor of the active site.

This sequence belongs to the thiolase-like superfamily. Thiolase family. In terms of assembly, heterotetramer of 2 alpha/HADHA and 2 beta/HADHB subunits; forms the mitochondrial trifunctional enzyme. Also purified as higher order heterooligomers including a 4 alpha/HADHA and 4 beta/HADHB heterooligomer which physiological significance remains unclear. The mitochondrial trifunctional enzyme interacts with MTLN. Interacts with RSAD2/viperin.

Its subcellular location is the mitochondrion. It is found in the mitochondrion inner membrane. The protein resides in the mitochondrion outer membrane. It localises to the endoplasmic reticulum. The catalysed reaction is an acyl-CoA + acetyl-CoA = a 3-oxoacyl-CoA + CoA. The enzyme catalyses butanoyl-CoA + acetyl-CoA = 3-oxohexanoyl-CoA + CoA. It carries out the reaction hexanoyl-CoA + acetyl-CoA = 3-oxooctanoyl-CoA + CoA. It catalyses the reaction octanoyl-CoA + acetyl-CoA = 3-oxodecanoyl-CoA + CoA. The catalysed reaction is decanoyl-CoA + acetyl-CoA = 3-oxododecanoyl-CoA + CoA. The enzyme catalyses dodecanoyl-CoA + acetyl-CoA = 3-oxotetradecanoyl-CoA + CoA. It carries out the reaction tetradecanoyl-CoA + acetyl-CoA = 3-oxohexadecanoyl-CoA + CoA. Its pathway is lipid metabolism; fatty acid beta-oxidation. Functionally, mitochondrial trifunctional enzyme catalyzes the last three of the four reactions of the mitochondrial beta-oxidation pathway. The mitochondrial beta-oxidation pathway is the major energy-producing process in tissues and is performed through four consecutive reactions breaking down fatty acids into acetyl-CoA. Among the enzymes involved in this pathway, the trifunctional enzyme exhibits specificity for long-chain fatty acids. Mitochondrial trifunctional enzyme is a heterotetrameric complex composed of two proteins, the trifunctional enzyme subunit alpha/HADHA carries the 2,3-enoyl-CoA hydratase and the 3-hydroxyacyl-CoA dehydrogenase activities, while the trifunctional enzyme subunit beta/HADHB described here bears the 3-ketoacyl-CoA thiolase activity. This is Trifunctional enzyme subunit beta, mitochondrial (HADHB) from Bos taurus (Bovine).